The sequence spans 153 residues: UPF0756 membrane protein Lm4b_01579 (153 aa).

Transmembrane regions (helical) follow at residues 6 to 26 (MLFL…SLII), 54 to 74 (WGVT…QIGF), 80 to 100 (SFKS…SILA), and 117 to 137 (LVFG…GPVI).

The protein belongs to the UPF0756 family.

The protein resides in the cell membrane. This Listeria monocytogenes serotype 4b (strain CLIP80459) protein is UPF0756 membrane protein Lm4b_01579.